A 439-amino-acid polypeptide reads, in one-letter code: 23S rRNA (uracil(1939)-C(5))-methyltransferase RlmD (439 aa).

The TRAM domain maps to 10-68 (KSTQPQRIEFTVDSLDHHCVGIGRHQGKAIFIEGALPGEQVKARILDDKKQYAHAALQQ). [4Fe-4S] cluster contacts are provided by Cys-81, Cys-87, Cys-90, and Cys-169. S-adenosyl-L-methionine contacts are provided by Gln-273, Phe-302, Asn-307, Glu-323, Asp-350, and Asp-371. The Nucleophile role is filled by Cys-397.

Belongs to the class I-like SAM-binding methyltransferase superfamily. RNA M5U methyltransferase family. RlmD subfamily.

The catalysed reaction is uridine(1939) in 23S rRNA + S-adenosyl-L-methionine = 5-methyluridine(1939) in 23S rRNA + S-adenosyl-L-homocysteine + H(+). In terms of biological role, catalyzes the formation of 5-methyl-uridine at position 1939 (m5U1939) in 23S rRNA. In Aeromonas salmonicida (strain A449), this protein is 23S rRNA (uracil(1939)-C(5))-methyltransferase RlmD.